The following is a 176-amino-acid chain: Cell division control protein 31 (176 aa).

Basic residues predominate over residues 1–12; it reads MFANARAKRRSR. Residues 1-21 are disordered; it reads MFANARAKRRSRASSPTPARL. 4 EF-hand domains span residues 34–69, 70–105, 107–142, and 143–176; these read EQRQ…LGFN, AEKS…KIVE, DPLE…LNEN, and IDDQ…MDEA. Positions 47, 49, 51, and 58 each coordinate Ca(2+). Residues Asp156, Asp158, Asp160, Glu162, and Glu167 each contribute to the Ca(2+) site.

The protein belongs to the centrin family. In terms of assembly, component of the spindle pole body (SPB), acting as the connector of microtubule arrays in the cytoplasm and the nucleoplasm, is involved in nuclear positioning before chromosome segregation, SPB separation, spindle formation, chromosome segregation, nuclear migration into the bud, nuclear reorientation after cytokinesis and nuclear fusion during conjugation. The SPB half-bridge, which is tightly associated with the cytoplasmic side of the nuclear envelope and the SPB, is playing a key role as the starting structure for and in the initiation of SPB duplication in G1. Within the complex, interacts with sad1.

It is found in the nucleus. Functionally, required for the proper coordination between exit from mitosis and the initiation of septation. Has a role in bipolar spindle formation during spindle pole body (SPB) duplication. Required for the localization of sad1 to the SPB. The chain is Cell division control protein 31 (cdc31) from Schizosaccharomyces pombe (strain 972 / ATCC 24843) (Fission yeast).